The following is a 117-amino-acid chain: Large ribosomal subunit protein uL18 (117 aa).

The protein belongs to the universal ribosomal protein uL18 family. Part of the 50S ribosomal subunit; part of the 5S rRNA/L5/L18/L25 subcomplex. Contacts the 5S and 23S rRNAs.

Its function is as follows. This is one of the proteins that bind and probably mediate the attachment of the 5S RNA into the large ribosomal subunit, where it forms part of the central protuberance. The chain is Large ribosomal subunit protein uL18 from Halorhodospira halophila (strain DSM 244 / SL1) (Ectothiorhodospira halophila (strain DSM 244 / SL1)).